Here is a 630-residue protein sequence, read N- to C-terminus: Mannosyl-oligosaccharide 1,2-alpha-mannosidase IC (630 aa).

Topologically, residues M1–K22 are cytoplasmic. The helical; Signal-anchor for type II membrane protein transmembrane segment at F23–L43 threads the bilayer. Topologically, residues P44–H630 are lumenal. Residues P74–P140 form a disordered region. A compositionally biased stretch (pro residues) spans P80–P89. The span at P102–R113 shows a compositional bias: basic residues. S164 is subject to Phosphoserine. N250 is a glycosylation site (N-linked (GlcNAc...) asparagine). A disulfide bridge links C453 with C485. The Proton donor role is filled by E499. Residue T610 coordinates Ca(2+). An N-linked (GlcNAc...) asparagine glycan is attached at N618.

It belongs to the glycosyl hydrolase 47 family. The cofactor is Ca(2+). As to expression, expressed in most tissues with the exception of lung, muscle and pancreas. Highly expressed in placenta.

Its subcellular location is the golgi apparatus membrane. It catalyses the reaction N(4)-(alpha-D-Man-(1-&gt;2)-alpha-D-Man-(1-&gt;2)-alpha-D-Man-(1-&gt;3)-[alpha-D-Man-(1-&gt;2)-alpha-D-Man-(1-&gt;3)-[alpha-D-Man-(1-&gt;2)-alpha-D-Man-(1-&gt;6)]-alpha-D-Man-(1-&gt;6)]-beta-D-Man-(1-&gt;4)-beta-D-GlcNAc-(1-&gt;4)-beta-D-GlcNAc)-L-asparaginyl-[protein] (N-glucan mannose isomer 9A1,2,3B1,2,3) + 4 H2O = N(4)-(alpha-D-Man-(1-&gt;3)-[alpha-D-Man-(1-&gt;3)-[alpha-D-Man-(1-&gt;6)]-alpha-D-Man-(1-&gt;6)]-beta-D-Man-(1-&gt;4)-beta-D-GlcNAc-(1-&gt;4)-beta-D-GlcNAc)-L-asparaginyl-[protein] (N-glucan mannose isomer 5A1,2) + 4 beta-D-mannose. The enzyme catalyses N(4)-(alpha-D-Man-(1-&gt;2)-alpha-D-Man-(1-&gt;2)-alpha-D-Man-(1-&gt;3)-[alpha-D-Man-(1-&gt;3)-[alpha-D-Man-(1-&gt;2)-alpha-D-Man-(1-&gt;6)]-alpha-D-Man-(1-&gt;6)]-beta-D-Man-(1-&gt;4)-beta-D-GlcNAc-(1-&gt;4)-beta-D-GlcNAc)-L-asparaginyl-[protein] (N-glucan mannose isomer 8A1,2,3B1,3) + 3 H2O = N(4)-(alpha-D-Man-(1-&gt;3)-[alpha-D-Man-(1-&gt;3)-[alpha-D-Man-(1-&gt;6)]-alpha-D-Man-(1-&gt;6)]-beta-D-Man-(1-&gt;4)-beta-D-GlcNAc-(1-&gt;4)-beta-D-GlcNAc)-L-asparaginyl-[protein] (N-glucan mannose isomer 5A1,2) + 3 beta-D-mannose. Its pathway is protein modification; protein glycosylation. With respect to regulation, inhibited by both 1-deoxymannojirimycin and kifunensine. Its function is as follows. Involved in the maturation of Asn-linked oligosaccharides. Trim alpha-1,2-linked mannose residues from Man(9)GlcNAc(2) to produce first Man(8)GlcNAc(2) then Man(6)GlcNAc and a small amount of Man(5)GlcNAc. This chain is Mannosyl-oligosaccharide 1,2-alpha-mannosidase IC (MAN1C1), found in Homo sapiens (Human).